Reading from the N-terminus, the 315-residue chain is PIH1 domain-containing protein 2 (315 aa).

Belongs to the PIH1 family.

The protein is PIH1 domain-containing protein 2 (Pih1d2) of Mus musculus (Mouse).